The sequence spans 533 residues: Atypical kinase COQ8B, mitochondrial (533 aa).

A helical membrane pass occupies residues 93–109 (LASFGGLAVGLGLGALA). Positions 156–159 (KIGQ) match the KxGQ motif motif. The Protein kinase domain maps to 192–424 (MMRVLEEELG…DRVLQKSQDL (233 aa)). An AAAS motif motif is present at residues 217–220 (AAAS). Residues serine 220, lysine 238, and 325–328 (MELA) contribute to the ATP site. Aspartate 368 serves as the catalytic Proton acceptor. ATP contacts are provided by asparagine 373 and aspartate 387.

The protein belongs to the protein kinase superfamily. ADCK protein kinase family. In terms of assembly, homodimer; homodimerizes via its transmembrane region. Interacts with COQ6 and COQ7. Interacts with the multi-subunit COQ enzyme complex, composed of at least COQ3, COQ4, COQ5, COQ6, COQ7 and COQ9.

The protein resides in the mitochondrion membrane. It localises to the cytoplasm. It is found in the cytosol. Its subcellular location is the cell membrane. Its pathway is cofactor biosynthesis; ubiquinone biosynthesis. Functionally, atypical kinase involved in the biosynthesis of coenzyme Q, also named ubiquinone, an essential lipid-soluble electron transporter for aerobic cellular respiration. Its substrate specificity is still unclear: may act as a protein kinase that mediates phosphorylation of COQ3. According to other reports, acts as a small molecule kinase, possibly a lipid kinase that phosphorylates a prenyl lipid in the ubiquinone biosynthesis pathway, as suggested by its ability to bind coenzyme Q lipid intermediates. However, the small molecule kinase activity was not confirmed by another publication. Required for podocyte migration. In Mus musculus (Mouse), this protein is Atypical kinase COQ8B, mitochondrial.